The following is a 351-amino-acid chain: C-X-C chemokine receptor type 1 (351 aa).

The Extracellular portion of the chain corresponds to 1 to 46 (MSNATDPQMGDDDYDLNFTGMPPTDEDYSPCRLETQSLNKYVVIVT). N-linked (GlcNAc...) asparagine glycans are attached at residues N3 and N17. Residues 47–67 (YALVFLLSLLGNSLVMLVILY) form a helical membrane-spanning segment. Over 68–76 (RRVGRSVTD) the chain is Cytoplasmic. A helical membrane pass occupies residues 77–97 (VYLLNLAMADLLFALTLPIWA). Over 98-112 (ASKVNGWIFGTFLCK) the chain is Extracellular. C111 and C188 form a disulfide bridge. The chain crosses the membrane as a helical span at residues 113–133 (VVSLLKEVNFYSGILLLACIS). At 134-154 (VDRYLAIVHATRTLIQKRHSV) the chain is on the cytoplasmic side. Residues 155–175 (KFVCLSCWGLSVILSLPFFLF) traverse the membrane as a helical segment. Residues 176–204 (RQAYHPNNSTPVCYEVLGNDTAKWRMVLR) are Extracellular-facing. N182 and N194 each carry an N-linked (GlcNAc...) asparagine glycan. The chain crosses the membrane as a helical span at residues 205–225 (ILPHTFGFTLPLLIMLFCYGF). The Cytoplasmic segment spans residues 226 to 243 (TLHTLFKAHIGQKHRAMR). The helical transmembrane segment at 244-264 (VIFAVVLIFLLCWLPYNLVLL) threads the bilayer. At 265–289 (ADTLMRTHLIKESCERRNDIGRALD) the chain is on the extracellular side. Residues 290-310 (ATEILGFLHSCLNPIIYAFIG) traverse the membrane as a helical segment. At 311–351 (QNFRHGFLKILATHGLVSKEFLARHHVTSYTSSSVNVSSNL) the chain is on the cytoplasmic side.

Belongs to the G-protein coupled receptor 1 family. Interacts with IL8. Interacts with GNAI2.

It is found in the cell membrane. In terms of biological role, receptor to interleukin-8, which is a powerful neutrophils chemotactic factor. Binding of IL-8 to the receptor causes activation of neutrophils. This response is mediated via a G-protein that activates a phosphatidylinositol-calcium second messenger system. The sequence is that of C-X-C chemokine receptor type 1 (CXCR1) from Macaca mulatta (Rhesus macaque).